We begin with the raw amino-acid sequence, 224 residues long: Phosphoribosylformylglycinamidine synthase subunit PurQ (224 aa).

The Glutamine amidotransferase type-1 domain maps to 1–224 (MIAIIKFPGT…ILLRRLGEWA (224 aa)). The Nucleophile role is filled by Cys84. Residues His196 and Glu198 contribute to the active site.

In terms of assembly, part of the FGAM synthase complex composed of 1 PurL, 1 PurQ and 2 PurS subunits.

It is found in the cytoplasm. The catalysed reaction is N(2)-formyl-N(1)-(5-phospho-beta-D-ribosyl)glycinamide + L-glutamine + ATP + H2O = 2-formamido-N(1)-(5-O-phospho-beta-D-ribosyl)acetamidine + L-glutamate + ADP + phosphate + H(+). It carries out the reaction L-glutamine + H2O = L-glutamate + NH4(+). It functions in the pathway purine metabolism; IMP biosynthesis via de novo pathway; 5-amino-1-(5-phospho-D-ribosyl)imidazole from N(2)-formyl-N(1)-(5-phospho-D-ribosyl)glycinamide: step 1/2. Part of the phosphoribosylformylglycinamidine synthase complex involved in the purines biosynthetic pathway. Catalyzes the ATP-dependent conversion of formylglycinamide ribonucleotide (FGAR) and glutamine to yield formylglycinamidine ribonucleotide (FGAM) and glutamate. The FGAM synthase complex is composed of three subunits. PurQ produces an ammonia molecule by converting glutamine to glutamate. PurL transfers the ammonia molecule to FGAR to form FGAM in an ATP-dependent manner. PurS interacts with PurQ and PurL and is thought to assist in the transfer of the ammonia molecule from PurQ to PurL. In Saccharolobus solfataricus (strain ATCC 35092 / DSM 1617 / JCM 11322 / P2) (Sulfolobus solfataricus), this protein is Phosphoribosylformylglycinamidine synthase subunit PurQ.